The chain runs to 199 residues: Superoxide dismutase [Mn/Fe] 1 (199 aa).

His-27, His-81, Asp-161, and His-165 together coordinate Fe(3+). His-27, His-81, Asp-161, and His-165 together coordinate Mn(2+).

This sequence belongs to the iron/manganese superoxide dismutase family. As to quaternary structure, homodimer. Can also form a heterodimer with SodM. It depends on Mn(2+) as a cofactor. The cofactor is Fe(3+).

The enzyme catalyses 2 superoxide + 2 H(+) = H2O2 + O2. In terms of biological role, destroys superoxide anion radicals which are normally produced within the cells and which are toxic to biological systems. Catalyzes the dismutation of superoxide anion radicals into O2 and H2O2 by successive reduction and oxidation of the transition metal ion at the active site. The protein is Superoxide dismutase [Mn/Fe] 1 (sodA) of Staphylococcus aureus (strain USA300).